Here is an 842-residue protein sequence, read N- to C-terminus: Non-motile and phage-resistance protein (842 aa).

3 helical membrane-spanning segments follow: residues 29 to 50 (VFVR…AFGV), 283 to 303 (GAFS…LLMI), and 343 to 363 (VYLS…VVSG). The region spanning 318-389 (SERRFRLAVE…QALANAAMYG (72 aa)) is the PAS domain. The region spanning 607–830 (NMSHELRTPL…TVSFTLPVRH (224 aa)) is the Histidine kinase domain. H610 is modified (phosphohistidine; by autocatalysis).

It is found in the cell membrane. The enzyme catalyses ATP + protein L-histidine = ADP + protein N-phospho-L-histidine.. Its function is as follows. Member of the two-component regulatory system involved in the regulation of polar organelle development. PleC functions as a membrane-associated protein kinase that transfers phosphate to the response regulator PleD, leading to its activation. The sequence is that of Non-motile and phage-resistance protein (pleC) from Caulobacter vibrioides (strain ATCC 19089 / CIP 103742 / CB 15) (Caulobacter crescentus).